Here is a 255-residue protein sequence, read N- to C-terminus: 3-deoxy-manno-octulosonate cytidylyltransferase (255 aa).

This sequence belongs to the KdsB family.

It localises to the cytoplasm. The catalysed reaction is 3-deoxy-alpha-D-manno-oct-2-ulosonate + CTP = CMP-3-deoxy-beta-D-manno-octulosonate + diphosphate. It participates in nucleotide-sugar biosynthesis; CMP-3-deoxy-D-manno-octulosonate biosynthesis; CMP-3-deoxy-D-manno-octulosonate from 3-deoxy-D-manno-octulosonate and CTP: step 1/1. Its pathway is bacterial outer membrane biogenesis; lipopolysaccharide biosynthesis. Functionally, activates KDO (a required 8-carbon sugar) for incorporation into bacterial lipopolysaccharide in Gram-negative bacteria. The sequence is that of 3-deoxy-manno-octulosonate cytidylyltransferase from Glaesserella parasuis serovar 5 (strain SH0165) (Haemophilus parasuis).